The primary structure comprises 256 residues: Small ribosomal subunit protein uS2 (256 aa).

Belongs to the universal ribosomal protein uS2 family.

In Rhizobium rhizogenes (strain K84 / ATCC BAA-868) (Agrobacterium radiobacter), this protein is Small ribosomal subunit protein uS2.